We begin with the raw amino-acid sequence, 195 residues long: Acireductone dioxygenase 2 (195 aa).

His-94, His-96, Glu-100, and His-139 together coordinate Fe(2+). Ni(2+) is bound by residues His-94, His-96, Glu-100, and His-139.

It belongs to the acireductone dioxygenase (ARD) family. Requires Fe(2+) as cofactor. Ni(2+) serves as cofactor.

The protein resides in the cytoplasm. Its subcellular location is the nucleus. It catalyses the reaction 1,2-dihydroxy-5-(methylsulfanyl)pent-1-en-3-one + O2 = 4-methylsulfanyl-2-oxobutanoate + formate + 2 H(+). It carries out the reaction 1,2-dihydroxy-5-(methylsulfanyl)pent-1-en-3-one + O2 = 3-(methylsulfanyl)propanoate + CO + formate + 2 H(+). It functions in the pathway amino-acid biosynthesis; L-methionine biosynthesis via salvage pathway; L-methionine from S-methyl-5-thio-alpha-D-ribose 1-phosphate: step 5/6. Catalyzes 2 different reactions between oxygen and the acireductone 1,2-dihydroxy-3-keto-5-methylthiopentene (DHK-MTPene) depending upon the metal bound in the active site. Fe-containing acireductone dioxygenase (Fe-ARD) produces formate and 2-keto-4-methylthiobutyrate (KMTB), the alpha-ketoacid precursor of methionine in the methionine recycle pathway. Ni-containing acireductone dioxygenase (Ni-ARD) produces methylthiopropionate, carbon monoxide and formate, and does not lie on the methionine recycle pathway. This Physcomitrium patens (Spreading-leaved earth moss) protein is Acireductone dioxygenase 2.